A 1639-amino-acid chain; its full sequence is RIMS-binding protein 3B (1639 aa).

Disordered regions lie at residues 1-22 (MAKD…SSPA), 215-240 (GSPD…CHAP), and 295-364 (SLDS…LTPS). Positions 21-143 (PAAAVLENQR…ELQRQLAEEL (123 aa)) form a coiled coil. A compositionally biased stretch (pro residues) spans 326–339 (SPPPSPLPPPPPPS). Coiled-coil stretches lie at residues 409–442 (QADE…QETN) and 480–619 (LAKD…AEEN). A disordered region spans residues 697 to 811 (CRPGHPPEQP…DRDTASEVDD (115 aa)). 2 stretches are compositionally biased toward polar residues: residues 707–718 (WETSQMPESQVK) and 761–775 (SVPQ…SQPL). Residues 776–790 (SKKTSSQSNSSSEGS) show a composition bias toward low complexity. The 68-residue stretch at 832–899 (PKLKIFMAQY…PSNFVEQIPD (68 aa)) folds into the SH3 1 domain. 2 consecutive Fibronectin type-III domains span residues 995–1083 (APMQ…TLLA) and 1088–1184 (PPLE…IPED). 3 disordered regions span residues 1251–1273 (PRRQ…GAGS), 1292–1325 (QKSP…SPAP), and 1392–1413 (GTER…QALG). Residues 1293–1305 (KSPQNHRPPSVSD) show a composition bias toward polar residues. Positions 1392 to 1406 (GTERREERREPEPHS) are enriched in basic and acidic residues. SH3 domains are found at residues 1452–1520 (TPAR…EMEV) and 1569–1636 (WTPK…HMSL).

This sequence belongs to the RIMBP family. As to quaternary structure, interacts with LRGUK (via guanylate kinase-like domain). Interacts (via C-terminus) with HOOK1 (via coiled-coil region).

It is found in the cytoplasm. The protein localises to the cytoskeleton. In terms of biological role, probable component of the manchette, a microtubule-based structure which plays a key role in sperm head morphogenesis during late stages of sperm development. The sequence is that of RIMS-binding protein 3B (RIMBP3B) from Homo sapiens (Human).